Consider the following 868-residue polypeptide: Rifampicin phosphotransferase (868 aa).

Residues 5 to 317 are ATP-binding; that stretch reads TERYVLDLQE…FHIVQSRPIT (313 aa). Residues Lys26, Arg120, Gly135, Thr139, Gln186, Glu300, Gln312, and Arg314 each contribute to the ATP site. The rifampicin-binding stretch occupies residues 330-755; that stretch reads NHVYVSVGHQ…TSDGEALTGA (426 aa). A disordered region spans residues 410 to 430; the sequence is FVPSLPDAPPAGPRAGAAPEP. A swivel phosphohistidine region spans residues 768 to 866; that stretch reads GLPVSTGTVE…VHGTDGYIEI (99 aa). The Tele-phosphohistidine intermediate role is filled by His826.

Belongs to the rifampicin phosphotransferase family.

It catalyses the reaction rifampicin + ATP + H2O = 21-phosphorifampicin + AMP + phosphate + 2 H(+). Functionally, catalyzes the phosphorylation of rifampicin, also known as rifampin (RIF), leading to its inactivation. Confers high level resistance to a variety of clinically used rifamycin antibiotics. Does not show phosphoenolpyruvate (PEP) synthase activity. The protein is Rifampicin phosphotransferase of Streptomyces sviceus (strain ATCC 29083 / DSM 924 / JCM 4929 / NBRC 13980 / NCIMB 11184 / NRRL 5439 / UC 5370).